The following is a 155-amino-acid chain: Endoribonuclease YbeY (155 aa).

Zn(2+)-binding residues include His-110, His-114, and His-120.

The protein belongs to the endoribonuclease YbeY family. Zn(2+) serves as cofactor.

It localises to the cytoplasm. Functionally, single strand-specific metallo-endoribonuclease involved in late-stage 70S ribosome quality control and in maturation of the 3' terminus of the 16S rRNA. The polypeptide is Endoribonuclease YbeY (Deinococcus geothermalis (strain DSM 11300 / CIP 105573 / AG-3a)).